Consider the following 266-residue polypeptide: Very-long-chain aldehyde decarbonylase GL1-11 (266 aa).

4 helical membrane passes run 25-45 (VVTF…SLLF), 74-94 (ILYH…AFKF), 106-126 (WTVI…IFYW), and 163-183 (ILFL…HLFT). The Fatty acid hydroxylase domain maps to 113-248 (VLFYFVLEDF…FVYMDWLFGT (136 aa)).

Belongs to the sterol desaturase family. In terms of assembly, homodimer.

The protein resides in the endoplasmic reticulum membrane. The catalysed reaction is a long-chain fatty aldehyde + 2 NADPH + O2 + H(+) = a long-chain alkane + formate + 2 NADP(+) + H2O. Its function is as follows. Aldehyde decarbonylase involved in the conversion of aldehydes to alkanes. Core component of a very-long-chain alkane synthesis complex. The sequence is that of Very-long-chain aldehyde decarbonylase GL1-11 from Oryza sativa subsp. indica (Rice).